A 398-amino-acid polypeptide reads, in one-letter code: Elongation factor Tu (398 aa).

The region spanning 10–207 (KPHVNIGTIG…TVDSYIPEPE (198 aa)) is the tr-type G domain. The interval 19-26 (GHVDHGKT) is G1. Residue 19–26 (GHVDHGKT) coordinates GTP. Threonine 26 contributes to the Mg(2+) binding site. The interval 63–67 (GITIN) is G2. Residues 84–87 (DAPG) are G3. Residues 84 to 88 (DAPGH) and 139 to 142 (NKVD) each bind GTP. The tract at residues 139-142 (NKVD) is G4. Residues 177–179 (SAL) form a G5 region.

It belongs to the TRAFAC class translation factor GTPase superfamily. Classic translation factor GTPase family. EF-Tu/EF-1A subfamily. In terms of assembly, monomer.

The protein localises to the cytoplasm. It carries out the reaction GTP + H2O = GDP + phosphate + H(+). GTP hydrolase that promotes the GTP-dependent binding of aminoacyl-tRNA to the A-site of ribosomes during protein biosynthesis. The chain is Elongation factor Tu from Streptococcus equi subsp. zooepidemicus (strain MGCS10565).